A 124-amino-acid polypeptide reads, in one-letter code: Protein ApaG (124 aa).

Residues 1–124 form the ApaG domain; it reads MSRYELTVQV…FALAMPRMLH (124 aa).

The chain is Protein ApaG from Ralstonia nicotianae (strain ATCC BAA-1114 / GMI1000) (Ralstonia solanacearum).